The following is a 283-amino-acid chain: uncharacterized protein (283 aa).

N-linked (GlcNAc...) asparagine glycosylation occurs at Asn15. Positions 15 to 81 constitute a PQ-loop 1 domain; it reads NATASTVFAI…QELNIALKVQ (67 aa). Transmembrane regions (helical) follow at residues 19 to 39, 48 to 68, 108 to 128, 138 to 158, 170 to 190, and 206 to 226; these read STVF…PQII, EGLD…LSVY, ALFV…MLIL, VEWP…IGFL, VTGI…FSFL, and GLLF…NVLL. Residues 149 to 204 enclose the PQ-loop 2 domain; it reads ATVLVNIGFLPQYISIFRARAVTGISYLFLAIDSSGSLFSFLSLPFDRWDVLAAVD. A glycan (N-linked (GlcNAc...) asparagine) is linked at Asn228.

It is found in the membrane. This is an uncharacterized protein from Schizosaccharomyces pombe (strain 972 / ATCC 24843) (Fission yeast).